Here is a 601-residue protein sequence, read N- to C-terminus: NADPH--cytochrome P450 reductase (601 aa).

Residues 25 to 169 (IVVFYGSQTG…DFVTWREQFW (145 aa)) form the Flavodoxin-like domain. FMN-binding positions include 31–36 (SQTGTG), 83–86 (ATYG), 118–127 (LGDKTYEHYN), and Asp-153. The 202-residue stretch at 224–425 (KNPFLAPVTV…ICAVLVEYXT (202 aa)) folds into the FAD-binding FR-type domain. FAD is bound by residues 399–402 (RYYS), 417–419 (CAV), Tyr-423, and 427–430 (GVAT). Residues Thr-458, 519–520 (SR), 525–529 (KVYVQ), and Asp-562 each bind NADP(+). Trp-600 contacts FAD.

The protein belongs to the NADPH--cytochrome P450 reductase family. It in the N-terminal section; belongs to the flavodoxin family. In the C-terminal section; belongs to the flavoprotein pyridine nucleotide cytochrome reductase family. It depends on FAD as a cofactor. The cofactor is FMN.

It localises to the endoplasmic reticulum membrane. The catalysed reaction is 2 oxidized [cytochrome P450] + NADPH = 2 reduced [cytochrome P450] + NADP(+) + H(+). Functionally, this enzyme is required for electron transfer from NADP to cytochrome P450 in microsomes. It can also provide electron transfer to heme oxygenase and cytochrome B5. In Salmo trutta (Brown trout), this protein is NADPH--cytochrome P450 reductase.